Here is a 945-residue protein sequence, read N- to C-terminus: Leucine--tRNA ligase (945 aa).

The 'HIGH' region signature appears at 43–53; that stretch reads PYPNGAIHIGH. Residues 638-642 carry the 'KMSKS' region motif; it reads KMSKS. Lys-641 provides a ligand contact to ATP.

It belongs to the class-I aminoacyl-tRNA synthetase family.

The protein localises to the cytoplasm. The catalysed reaction is tRNA(Leu) + L-leucine + ATP = L-leucyl-tRNA(Leu) + AMP + diphosphate. The sequence is that of Leucine--tRNA ligase from Pyrobaculum aerophilum (strain ATCC 51768 / DSM 7523 / JCM 9630 / CIP 104966 / NBRC 100827 / IM2).